The primary structure comprises 299 residues: Acetylglutamate kinase (299 aa).

Substrate contacts are provided by residues 70–71, R92, and N186; that span reads GG.

This sequence belongs to the acetylglutamate kinase family. ArgB subfamily.

The protein resides in the cytoplasm. The catalysed reaction is N-acetyl-L-glutamate + ATP = N-acetyl-L-glutamyl 5-phosphate + ADP. It participates in amino-acid biosynthesis; L-arginine biosynthesis; N(2)-acetyl-L-ornithine from L-glutamate: step 2/4. Catalyzes the ATP-dependent phosphorylation of N-acetyl-L-glutamate. The chain is Acetylglutamate kinase from Thermoanaerobacter sp. (strain X514).